We begin with the raw amino-acid sequence, 995 residues long: Bifunctional glutamine synthetase adenylyltransferase/adenylyl-removing enzyme (995 aa).

The interval methionine 1–aspartate 474 is adenylyl removase. GlnE stretches follow at residues arginine 122–glutamine 333 and serine 637–alanine 853. Residues alanine 479–arginine 995 are adenylyl transferase.

This sequence belongs to the GlnE family. Mg(2+) is required as a cofactor.

It catalyses the reaction [glutamine synthetase]-O(4)-(5'-adenylyl)-L-tyrosine + phosphate = [glutamine synthetase]-L-tyrosine + ADP. It carries out the reaction [glutamine synthetase]-L-tyrosine + ATP = [glutamine synthetase]-O(4)-(5'-adenylyl)-L-tyrosine + diphosphate. Its function is as follows. Involved in the regulation of glutamine synthetase GlnA, a key enzyme in the process to assimilate ammonia. When cellular nitrogen levels are high, the C-terminal adenylyl transferase (AT) inactivates GlnA by covalent transfer of an adenylyl group from ATP to specific tyrosine residue of GlnA, thus reducing its activity. Conversely, when nitrogen levels are low, the N-terminal adenylyl removase (AR) activates GlnA by removing the adenylyl group by phosphorolysis, increasing its activity. The regulatory region of GlnE binds the signal transduction protein PII (GlnB) which indicates the nitrogen status of the cell. The polypeptide is Bifunctional glutamine synthetase adenylyltransferase/adenylyl-removing enzyme (Bradyrhizobium diazoefficiens (strain JCM 10833 / BCRC 13528 / IAM 13628 / NBRC 14792 / USDA 110)).